Consider the following 492-residue polypeptide: N-succinylglutamate 5-semialdehyde dehydrogenase (492 aa).

Position 220–225 (220–225 (GSANTG)) interacts with NAD(+). Catalysis depends on residues Glu243 and Cys277.

Belongs to the aldehyde dehydrogenase family. AstD subfamily.

It carries out the reaction N-succinyl-L-glutamate 5-semialdehyde + NAD(+) + H2O = N-succinyl-L-glutamate + NADH + 2 H(+). It functions in the pathway amino-acid degradation; L-arginine degradation via AST pathway; L-glutamate and succinate from L-arginine: step 4/5. Functionally, catalyzes the NAD-dependent reduction of succinylglutamate semialdehyde into succinylglutamate. In Shigella flexneri, this protein is N-succinylglutamate 5-semialdehyde dehydrogenase.